The following is a 55-amino-acid chain: Small ribosomal subunit protein eS31 (55 aa).

4 residues coordinate Zn(2+): Cys-26, Cys-29, Cys-44, and Cys-47.

This sequence belongs to the eukaryotic ribosomal protein eS31 family. As to quaternary structure, part of the 30S ribosomal subunit. Zn(2+) is required as a cofactor.

In Archaeoglobus fulgidus (strain ATCC 49558 / DSM 4304 / JCM 9628 / NBRC 100126 / VC-16), this protein is Small ribosomal subunit protein eS31.